Reading from the N-terminus, the 498-residue chain is N-acyl-D-aspartate deacylase (498 aa).

Residues 478-498 (AERPGQVLAPGDAIPWSQQSE) are disordered.

The protein belongs to the metallo-dependent hydrolases superfamily. N-acyl-D-amino-acid deacylase family. Requires Zn(2+) as cofactor.

The protein localises to the cytoplasm. The enzyme catalyses an N-acyl-D-aspartate + H2O = D-aspartate + a carboxylate. This chain is N-acyl-D-aspartate deacylase, found in Alcaligenes xylosoxydans xylosoxydans (Achromobacter xylosoxidans).